Consider the following 453-residue polypeptide: Formimidoylglutamate deiminase (453 aa).

Residues histidine 56 and histidine 58 each contribute to the Zn(2+) site. N-formimidoyl-L-glutamate-binding residues include glutamine 61, arginine 82, tyrosine 121, histidine 206, and arginine 209. Histidine 232 provides a ligand contact to Zn(2+). Glutamate 235 is an N-formimidoyl-L-glutamate binding site. Active-site proton acceptor residues include histidine 269 and aspartate 320. Aspartate 320 lines the Zn(2+) pocket.

This sequence belongs to the metallo-dependent hydrolases superfamily. In terms of assembly, homodimer. It depends on Zn(2+) as a cofactor.

It catalyses the reaction N-formimidoyl-L-glutamate + H2O = N-formyl-L-glutamate + NH4(+). It functions in the pathway amino-acid degradation; L-histidine degradation into L-glutamate; L-glutamate from N-formimidoyl-L-glutamate (deiminase route): step 1/2. Its activity is regulated as follows. Inhibited by the metal chelator dipicolinate. Inhibited by N-formimino-L-aspartate and N-guanidino-L-glutaric acid. Its function is as follows. Catalyzes the hydrolysis of N-formimino-L-glutamate to N-formyl-L-glutamate and ammonia. The sequence is that of Formimidoylglutamate deiminase from Pseudomonas aeruginosa (strain ATCC 15692 / DSM 22644 / CIP 104116 / JCM 14847 / LMG 12228 / 1C / PRS 101 / PAO1).